The chain runs to 512 residues: Cytochrome P450 82C3 (512 aa).

A helical membrane pass occupies residues 1–21; the sequence is MDTSLFSLFVSILVFVFIALF. Residue Cys451 coordinates heme.

The protein belongs to the cytochrome P450 family. The cofactor is heme.

Its subcellular location is the membrane. This is Cytochrome P450 82C3 (CYP82C3) from Arabidopsis thaliana (Mouse-ear cress).